Here is a 103-residue protein sequence, read N- to C-terminus: Small ribosomal subunit protein uS10 (103 aa).

The protein belongs to the universal ribosomal protein uS10 family. As to quaternary structure, part of the 30S ribosomal subunit.

Involved in the binding of tRNA to the ribosomes. The sequence is that of Small ribosomal subunit protein uS10 from Alteromonas mediterranea (strain DSM 17117 / CIP 110805 / LMG 28347 / Deep ecotype).